Reading from the N-terminus, the 121-residue chain is Basic phospholipase A2 homolog blK-PLA2 (121 aa).

Intrachain disulfides connect Cys-26-Cys-115, Cys-28-Cys-44, Cys-43-Cys-95, Cys-49-Cys-121, Cys-50-Cys-88, Cys-57-Cys-81, and Cys-75-Cys-86. The interval 105–117 (KKYRYHLKPFCKK) is important for membrane-damaging activities in eukaryotes and bacteria; heparin-binding.

Belongs to the phospholipase A2 family. Group II subfamily. K49 sub-subfamily. As to quaternary structure, homodimer; non-covalently linked. Expressed by the venom gland.

The protein localises to the secreted. Its function is as follows. Snake venom phospholipase A2 (PLA2) homolog that lacks enzymatic activity. Shows myotoxic and edema-inducing activities in vivo. A model of myotoxic mechanism has been proposed: an apo Lys49-PLA2 is activated by the entrance of a hydrophobic molecule (e.g. fatty acid) at the hydrophobic channel of the protein leading to a reorientation of a monomer. This reorientation causes a transition between 'inactive' to 'active' states, causing alignment of C-terminal and membrane-docking sites (MDoS) side-by-side and putting the membrane-disruption sites (MDiS) in the same plane, exposed to solvent and in a symmetric position for both monomers. The MDoS region stabilizes the toxin on membrane by the interaction of charged residues with phospholipid head groups. Subsequently, the MDiS region destabilizes the membrane with penetration of hydrophobic residues. This insertion causes a disorganization of the membrane, allowing an uncontrolled influx of ions (i.e. calcium and sodium), and eventually triggering irreversible intracellular alterations and cell death. The polypeptide is Basic phospholipase A2 homolog blK-PLA2 (Bothrops leucurus (Whitetail lancehead)).